The sequence spans 151 residues: Transcriptional repressor NrdR (151 aa).

A zinc finger lies at Cys-3 to Cys-34. The 91-residue stretch at Ile-49 to Asp-139 folds into the ATP-cone domain.

This sequence belongs to the NrdR family. The cofactor is Zn(2+).

In terms of biological role, negatively regulates transcription of bacterial ribonucleotide reductase nrd genes and operons by binding to NrdR-boxes. The sequence is that of Transcriptional repressor NrdR from Sulfurihydrogenibium sp. (strain YO3AOP1).